Reading from the N-terminus, the 364-residue chain is PDZ and LIM domain protein 3 (364 aa).

Residues 1–84 (MPQTVILPGP…QLCLKIDRGE (84 aa)) enclose the PDZ domain. 3 positions are modified to phosphoserine: Ser-18, Ser-93, and Ser-264. Positions 292–351 (PLCDKCGSGIVGAVVKARDKYRHPECFVCADCNLNLKQKGYFFIEGELYCETHARARTKP) constitute an LIM zinc-binding domain.

In terms of assembly, interacts with ACTN2. Forms a heterodimer with PDLIM4 (via LIM domain). Isoform 1 is highly expressed in differentiated skeletal muscle. Isoform 2 is heart-specific.

It is found in the cytoplasm. The protein localises to the myofibril. Its subcellular location is the sarcomere. It localises to the z line. Its function is as follows. May play a role in the organization of actin filament arrays within muscle cells. The sequence is that of PDZ and LIM domain protein 3 (PDLIM3) from Homo sapiens (Human).